The sequence spans 450 residues: Glucose-6-phosphate isomerase (450 aa).

The Proton donor role is filled by E290. Active-site residues include H311 and K425.

This sequence belongs to the GPI family.

It is found in the cytoplasm. It catalyses the reaction alpha-D-glucose 6-phosphate = beta-D-fructose 6-phosphate. It functions in the pathway carbohydrate biosynthesis; gluconeogenesis. Its pathway is carbohydrate degradation; glycolysis; D-glyceraldehyde 3-phosphate and glycerone phosphate from D-glucose: step 2/4. Its function is as follows. Catalyzes the reversible isomerization of glucose-6-phosphate to fructose-6-phosphate. The sequence is that of Glucose-6-phosphate isomerase from Lactiplantibacillus plantarum (strain ATCC BAA-793 / NCIMB 8826 / WCFS1) (Lactobacillus plantarum).